A 925-amino-acid chain; its full sequence is Collagen alpha-2(I) chain (925 aa).

A disordered region spans residues 1–925 (SGGFDFSFLP…FGYEGDFYRA (925 aa)). Proline 10 and proline 13 each carry 4-hydroxyproline. Gly residues predominate over residues 22-34 (RYYGVGLGPGPMG). Residues 35–74 (LMGPRGPPGASGAPGPQGFQGPAGEPGEPGQTGPAGARGP) are compositionally biased toward low complexity. 2 positions are modified to 4-hydroxyproline: proline 42 and proline 48. Lysine 103 is modified (5-hydroxylysine; alternate). The O-linked (Gal...) hydroxylysine; alternate glycan is linked to lysine 103. A compositionally biased stretch (low complexity) spans 154-171 (DGSVGPVGPAGPIGSAGP). A compositionally biased stretch (gly residues) spans 271–280 (GESGGKGEPG). Low complexity predominate over residues 281–291 (SAGPQGPPGSS). Over residues 306 to 315 (GLRGGPGSRG) the composition is skewed to gly residues. 4-hydroxyproline is present on residues proline 317, proline 332, and proline 335. The segment covering 363-379 (IDGRPGPIGPAGARGEA) has biased composition (low complexity). The segment covering 423-432 (GVQGGKGEQG) has biased composition (gly residues). 2 stretches are compositionally biased toward low complexity: residues 479–496 (PGES…SRGP) and 508–518 (EPGVVGAPGTA). Positions 519 to 528 (GPAGSGGLPG) are enriched in gly residues. Composition is skewed to low complexity over residues 551–595 (VGTT…PRGS) and 602–622 (VGPA…QPGA). Residues 623 to 632 (KGERGTKGPK) show a composition bias toward basic and acidic residues. The span at 640–650 (PTGPVGSAGPA) shows a compositional bias: low complexity. Residues 660–669 (GSRGDGGPPG) are compositionally biased toward gly residues. A compositionally biased stretch (low complexity) spans 671 to 680 (TGFPGAAGRT). A compositionally biased stretch (gly residues) spans 696–718 (GAAGKGDQGPVGRGETGAGGPPG). 2 stretches are compositionally biased toward low complexity: residues 719-753 (FTGE…LGLP) and 761-771 (LPGVAGAVGEP). The span at 772-782 (GPLGIGPPGAR) shows a compositional bias: gly residues. Positions 791 to 806 (EPGPVGSVGPVGALGP) are enriched in low complexity. The segment covering 816–827 (RGDKGEPGEKGP) has biased composition (basic and acidic residues). Over residues 897-907 (PAGPPGPPGPP) the composition is skewed to pro residues.

It belongs to the fibrillar collagen family. In terms of assembly, trimers of one alpha 2(I) and two alpha 1(I) chains. Interacts (via C-terminus) with TMEM131 (via PapD-L domain); the interaction is direct and is involved in assembly and TRAPPIII ER-to-Golgi transport complex-dependent secretion of collagen. Prolines at the third position of the tripeptide repeating unit (G-X-Y) are hydroxylated in some or all of the chains. Expressed in bones.

Its subcellular location is the secreted. It is found in the extracellular space. The protein localises to the extracellular matrix. Type I collagen is a member of group I collagen (fibrillar forming collagen). In Acratocnus sp. (strain SLP-2019) (Ground sloth), this protein is Collagen alpha-2(I) chain.